The chain runs to 192 residues: dTDP-3-amino-3,6-dideoxy-alpha-D-galactopyranose 3-N-acetyltransferase (192 aa).

Belongs to the transferase hexapeptide repeat family.

It carries out the reaction dTDP-3-amino-3,6-dideoxy-alpha-D-galactopyranose + acetyl-CoA = dTDP-3-acetamido-3,6-dideoxy-alpha-D-galactopyranose + CoA + H(+). Its function is as follows. Catalyzes the transfer of an acetyl group to dTDP-D-Fucp3N to form dTDP-D-Fucp3NAc in the biosynthesis of dTDP-3-acetamido-3,6-dideoxy-alpha-D-galactose, a glycan chain of the S-layer. The protein is dTDP-3-amino-3,6-dideoxy-alpha-D-galactopyranose 3-N-acetyltransferase (fdtC) of Aneurinibacillus thermoaerophilus.